A 556-amino-acid chain; its full sequence is 2-succinyl-5-enolpyruvyl-6-hydroxy-3-cyclohexene-1-carboxylate synthase (556 aa).

Belongs to the TPP enzyme family. MenD subfamily. In terms of assembly, homodimer. Mg(2+) serves as cofactor. Mn(2+) is required as a cofactor. It depends on thiamine diphosphate as a cofactor.

It catalyses the reaction isochorismate + 2-oxoglutarate + H(+) = 5-enolpyruvoyl-6-hydroxy-2-succinyl-cyclohex-3-ene-1-carboxylate + CO2. It participates in quinol/quinone metabolism; 1,4-dihydroxy-2-naphthoate biosynthesis; 1,4-dihydroxy-2-naphthoate from chorismate: step 2/7. It functions in the pathway quinol/quinone metabolism; menaquinone biosynthesis. Its function is as follows. Catalyzes the thiamine diphosphate-dependent decarboxylation of 2-oxoglutarate and the subsequent addition of the resulting succinic semialdehyde-thiamine pyrophosphate anion to isochorismate to yield 2-succinyl-5-enolpyruvyl-6-hydroxy-3-cyclohexene-1-carboxylate (SEPHCHC). This Klebsiella pneumoniae (strain 342) protein is 2-succinyl-5-enolpyruvyl-6-hydroxy-3-cyclohexene-1-carboxylate synthase.